The following is a 382-amino-acid chain: Lipid-A-disaccharide synthase (382 aa).

It belongs to the LpxB family.

It carries out the reaction 2-N,3-O-bis[(3R)-3-hydroxytetradecanoyl]-alpha-D-glucosaminyl 1-phosphate + UDP-2-N,3-O-bis[(3R)-3-hydroxytetradecanoyl]-alpha-D-glucosamine = lipid A disaccharide (E. coli) + UDP + H(+). The catalysed reaction is a lipid X + a UDP-2-N,3-O-bis[(3R)-3-hydroxyacyl]-alpha-D-glucosamine = a lipid A disaccharide + UDP + H(+). It participates in glycolipid biosynthesis; lipid IV(A) biosynthesis; lipid IV(A) from (3R)-3-hydroxytetradecanoyl-[acyl-carrier-protein] and UDP-N-acetyl-alpha-D-glucosamine: step 5/6. Its function is as follows. Condensation of UDP-2,3-diacylglucosamine and 2,3-diacylglucosamine-1-phosphate to form lipid A disaccharide, a precursor of lipid A, a phosphorylated glycolipid that anchors the lipopolysaccharide to the outer membrane of the cell. This is Lipid-A-disaccharide synthase from Escherichia coli (strain SMS-3-5 / SECEC).